Reading from the N-terminus, the 128-residue chain is Cystatin-12 (128 aa).

The signal sequence occupies residues 1 to 21; that stretch reads MLWKSVLPVALIVLGIHDCSF. 2 disulfide bridges follow: cysteine 82-cysteine 92 and cysteine 105-cysteine 125. Asparagine 122 is a glycosylation site (N-linked (GlcNAc...) asparagine).

This sequence belongs to the cystatin family.

Its subcellular location is the secreted. May play a specialized role in spermatogenesis. The sequence is that of Cystatin-12 (Cst12) from Rattus norvegicus (Rat).